A 440-amino-acid polypeptide reads, in one-letter code: GTPase Der (440 aa).

EngA-type G domains follow at residues 4–168 (PIVA…PENK) and 177–352 (IKVA…NQRA). Residues 10–17 (GRPNVGKS), 57–61 (DTGGI), 120–123 (NKVD), 183–190 (GKPNVGKS), 230–234 (DTAGL), and 295–298 (NKWD) contribute to the GTP site. In terms of domain architecture, KH-like spans 353-437 (MRVPTGGLNE…PIRFIYREKS (85 aa)).

This sequence belongs to the TRAFAC class TrmE-Era-EngA-EngB-Septin-like GTPase superfamily. EngA (Der) GTPase family. Associates with the 50S ribosomal subunit.

GTPase that plays an essential role in the late steps of ribosome biogenesis. This is GTPase Der from Alkaliphilus metalliredigens (strain QYMF).